A 201-amino-acid polypeptide reads, in one-letter code: FMN-dependent NADH:quinone oxidoreductase (201 aa).

Residues S9 and 16–18 contribute to the FMN site; that span reads SYS.

This sequence belongs to the azoreductase type 1 family. Homodimer. It depends on FMN as a cofactor.

The catalysed reaction is 2 a quinone + NADH + H(+) = 2 a 1,4-benzosemiquinone + NAD(+). It carries out the reaction N,N-dimethyl-1,4-phenylenediamine + anthranilate + 2 NAD(+) = 2-(4-dimethylaminophenyl)diazenylbenzoate + 2 NADH + 2 H(+). Quinone reductase that provides resistance to thiol-specific stress caused by electrophilic quinones. Functionally, also exhibits azoreductase activity. Catalyzes the reductive cleavage of the azo bond in aromatic azo compounds to the corresponding amines. In Mesomycoplasma hyopneumoniae (strain J / ATCC 25934 / NCTC 10110) (Mycoplasma hyopneumoniae), this protein is FMN-dependent NADH:quinone oxidoreductase.